Here is a 680-residue protein sequence, read N- to C-terminus: Leucine-rich repeat and calponin homology domain-containing protein 4 (680 aa).

Residues 1-22 (MAAAVAGPLAAGGEEAAASVSL) are compositionally biased toward low complexity. A disordered region spans residues 1 to 35 (MAAAVAGPLAAGGEEAAASVSLPGSPGLPGSRSAE). 9 LRR repeats span residues 41 to 64 (AVAT…AARS), 67 to 90 (LSDI…ACQL), 92 to 113 (SLEG…LGNL), 114 to 136 (TALT…ICQL), 138 to 158 (LRVL…ISTL), 159 to 181 (GSLR…LCSL), 182 to 204 (RSLR…LGDL), 206 to 226 (LVRL…FCRL), and 227 to 250 (RHLQ…CLKG). Phosphoserine occurs at positions 279, 281, 304, 307, 309, and 313. A disordered region spans residues 329 to 528 (SELARDPRGP…PSSPESVLRP (200 aa)). The segment covering 330 to 345 (ELARDPRGPRQPREDG) has biased composition (basic and acidic residues). Residues 346 to 355 (AGDGDLEQID) show a composition bias toward acidic residues. Basic and acidic residues-rich tracts occupy residues 357–371 (IDSH…RSAA) and 385–418 (DVEK…ERKQ). Ser-432 carries the post-translational modification Phosphoserine. Composition is skewed to low complexity over residues 440–453 (AAGA…TQAT) and 510–528 (RSSS…VLRP). Phosphoserine is present on residues Ser-511, Ser-513, Ser-517, Ser-521, and Ser-586. One can recognise a Calponin-homology (CH) domain in the interval 531–644 (FPQEKELISQ…VLEAVILVGG (114 aa)). Residues 655–675 (GLGGFLLFYVVFMLLLYVVYT) traverse the membrane as a helical segment.

As to expression, widely expressed across tissues, with the most abundant expression in spleen, testes, thymus, intestine, and blood. Expressed in macrophages.

It localises to the cell membrane. Its function is as follows. Accessory protein that regulates signaling by multiple TLRs, acting as a broad-spanning regulator of the innate immune response. In macrophages, binds LPS and promotes proper docking of LPS in lipid raft membrane. May be required for lipid raft maintenance. In Mus musculus (Mouse), this protein is Leucine-rich repeat and calponin homology domain-containing protein 4 (Lrch4).